A 547-amino-acid polypeptide reads, in one-letter code: bZIP transcription factor 29 (547 aa).

Disordered regions lie at residues 1-199, 244-312, and 333-356; these read MGDT…SGGE, NSSE…DIAP, and GDESLKPPPSPGSMSRKVSPTNSV. Residues 15 to 52 show a composition bias toward polar residues; that stretch reads LHSSFGTTSSSIPKNPISQLDLNPNFIRSSAPQFSKPF. Residues 63-73 show a composition bias toward pro residues; that stretch reads PSHPNLIPPTS. Polar residues predominate over residues 74 to 89; sequence PFSQIPTTRQPGSHNF. Basic and acidic residues predominate over residues 120 to 132; the sequence is FRDHDVSMEDRDS. Residues 134-157 are compositionally biased toward polar residues; the sequence is VFNSNHSLPPSPFTRCNSTSSSSL. Over residues 249 to 263 the composition is skewed to basic and acidic residues; it reads DDSKNGNENRDDMES. Positions 264-275 are enriched in polar residues; it reads SRASGTKTNGSD. Residues 279 to 294 are compositionally biased toward low complexity; it reads ESSSVNESANNNMNSS. Positions 344–356 are enriched in polar residues; it reads GSMSRKVSPTNSV. Residues 394–457 enclose the bZIP domain; it reads DPKRVKRILA…MGLTNQNNEL (64 aa). The basic motif stretch occupies residues 396 to 417; sequence KRVKRILANRQSAARSKERKMR. Positions 416–469 form a coiled coil; sequence MRYIVELEHKVQTLQTEATTLSAQLTLLQRDMMGLTNQNNELKFRLQAMEQQAR. The tract at residues 422-457 is leucine-zipper; the sequence is LEHKVQTLQTEATTLSAQLTLLQRDMMGLTNQNNEL. The span at 517–535 shows a compositional bias: low complexity; the sequence is QLRQQPQQMQQQSHQQNHQ. The disordered stretch occupies residues 517–547; sequence QLRQQPQQMQQQSHQQNHQNGTMATKSESNE. A compositionally biased stretch (polar residues) spans 536 to 547; that stretch reads NGTMATKSESNE.

Forms homodimers. Expressed in roots, leaves and flowers. Expressed in the root tips, lateral root primordia, and guard cells of leaves, hypocotyls and anthers.

It is found in the cytoplasm. Its subcellular location is the nucleus. In terms of biological role, transcription factor that acts as a repressor of reproductive development, meristem size and plant growth. Regulates meristem size, cell size and cell number during plant development. Binds to the promoters of the cell cycle regulators CYCB1-2 and SMR4, and genes involved in cell wall organization, such as XTH9, EXPA1 and EXPA3. Possesses transactivation activity in yeast. Possesses transactivation activity in plant protoplasts. Plays a role in abiotic stress response by binding to the 5'-CAGCTG-3' DNA sequence found in the promoters of MYB44 and TRX8. Plays a role in osmosensory response by binding to the 5'-AGCTGT/G-3' DNA sequence found in the promoters of the hypoosmolarity-responsive genes CYP707A1 and CYP707A3. Binds to the 5'-AGCTGT-3' DNA sequence found in the promoter of the ZAT1 gene in response to abiotic stresses, such as oxidative stress, high-light, osmotic shock, salt and heat stresses. The protein is bZIP transcription factor 29 of Arabidopsis thaliana (Mouse-ear cress).